We begin with the raw amino-acid sequence, 321 residues long: Lipoyl synthase (321 aa).

[4Fe-4S] cluster contacts are provided by cysteine 68, cysteine 73, cysteine 79, cysteine 94, cysteine 98, cysteine 101, and serine 308. The region spanning 80–297 (FNHGTATFMI…KALADELGFT (218 aa)) is the Radical SAM core domain.

This sequence belongs to the radical SAM superfamily. Lipoyl synthase family. Requires [4Fe-4S] cluster as cofactor.

It localises to the cytoplasm. It carries out the reaction [[Fe-S] cluster scaffold protein carrying a second [4Fe-4S](2+) cluster] + N(6)-octanoyl-L-lysyl-[protein] + 2 oxidized [2Fe-2S]-[ferredoxin] + 2 S-adenosyl-L-methionine + 4 H(+) = [[Fe-S] cluster scaffold protein] + N(6)-[(R)-dihydrolipoyl]-L-lysyl-[protein] + 4 Fe(3+) + 2 hydrogen sulfide + 2 5'-deoxyadenosine + 2 L-methionine + 2 reduced [2Fe-2S]-[ferredoxin]. It participates in protein modification; protein lipoylation via endogenous pathway; protein N(6)-(lipoyl)lysine from octanoyl-[acyl-carrier-protein]: step 2/2. Functionally, catalyzes the radical-mediated insertion of two sulfur atoms into the C-6 and C-8 positions of the octanoyl moiety bound to the lipoyl domains of lipoate-dependent enzymes, thereby converting the octanoylated domains into lipoylated derivatives. The protein is Lipoyl synthase of Shewanella baltica (strain OS185).